The sequence spans 21 residues: Bombinin-H4 (21 aa).

Residue I2 is modified to D-allo-isoleucine. I20 is modified (isoleucine amide).

The protein belongs to the bombinin family. In terms of tissue distribution, expressed by the skin glands.

The protein localises to the secreted. Its function is as follows. Has antimicrobial and hemolytic activities. The chain is Bombinin-H4 from Bombina variegata (Yellow-bellied toad).